A 211-amino-acid chain; its full sequence is Rho-related GTP-binding protein RhoF (211 aa).

N-acetylmethionine is present on methionine 1. 26-33 (GDGGCGKT) contacts GTP. The short motif at 48 to 56 (YAPSVFEKY) is the Effector region element. Residues 73-77 (DTAGQ) and 131-134 (CKTD) contribute to the GTP site. Residue cysteine 208 is modified to Cysteine methyl ester. A lipid anchor (S-geranylgeranyl cysteine) is attached at cysteine 208. A propeptide spans 209 to 211 (LLL) (removed in mature form).

It belongs to the small GTPase superfamily. Rho family.

The protein localises to the cell membrane. The protein resides in the cytoplasm. It localises to the cytoskeleton. Its function is as follows. Plasma membrane-associated small GTPase which cycles between an active GTP-bound and an inactive GDP-bound state. Causes the formation of thin, actin-rich surface projections called filopodia. Functions cooperatively with CDC42 and Rac to generate additional structures, increasing the diversity of actin-based morphology. The sequence is that of Rho-related GTP-binding protein RhoF (RHOF) from Homo sapiens (Human).